A 243-amino-acid chain; its full sequence is Aliphatic sulfonates import ATP-binding protein SsuB (243 aa).

The ABC transporter domain maps to 11 to 230; it reads ATVRGLRKSY…RTHPSFASYT (220 aa). ATP is bound at residue 43 to 50; it reads GRSGSGKS.

Belongs to the ABC transporter superfamily. Aliphatic sulfonates importer (TC 3.A.1.17.2) family. As to quaternary structure, the complex is composed of two ATP-binding proteins (SsuB), two transmembrane proteins (SsuC) and a solute-binding protein (SsuA).

Its subcellular location is the cell membrane. The catalysed reaction is ATP + H2O + aliphatic sulfonate-[sulfonate-binding protein]Side 1 = ADP + phosphate + aliphatic sulfonateSide 2 + [sulfonate-binding protein]Side 1.. Part of the ABC transporter complex SsuABC involved in aliphatic sulfonates import. Responsible for energy coupling to the transport system. Is also involved in taurine transport. Seems to not be involved in long chain aliphatic sulfonates transport (chain length of eight carbon atoms or more). This Corynebacterium glutamicum (strain ATCC 13032 / DSM 20300 / JCM 1318 / BCRC 11384 / CCUG 27702 / LMG 3730 / NBRC 12168 / NCIMB 10025 / NRRL B-2784 / 534) protein is Aliphatic sulfonates import ATP-binding protein SsuB.